Reading from the N-terminus, the 61-residue chain is Fasciculin-2 (61 aa).

Disulfide bonds link Cys-3–Cys-22, Cys-17–Cys-39, Cys-41–Cys-52, and Cys-53–Cys-59.

This sequence belongs to the three-finger toxin family. Short-chain subfamily. Acn-esterase inhibitor sub-subfamily. Expressed by the venom gland.

The protein resides in the secreted. Its function is as follows. Interferes with neuromuscular transmission by inhibiting the enzyme acetylcholinesterase (AChE) present at the neuromuscular junction. It selectively binds and inhibits with a 1:1 stoichiometry the mammalian and electric fish AChE at picomolar concentrations. It is highly specific for the peripheral site of AChE and blocks the entry of acetylcholine into the active site of the enzyme (through the Met-33 residue), thereby preventing its breakdown. It has been called fasciculin since after injection into mice it causes severe, generalized and long-lasting (5-7 hours) fasciculations. This Dendroaspis angusticeps (Eastern green mamba) protein is Fasciculin-2.